A 332-amino-acid polypeptide reads, in one-letter code: tRNA U34 carboxymethyltransferase (332 aa).

Residues lysine 96, tryptophan 110, lysine 115, glycine 135, 157-159 (DPT), 190-191 (IE), methionine 205, tyrosine 209, and arginine 324 contribute to the carboxy-S-adenosyl-L-methionine site.

It belongs to the class I-like SAM-binding methyltransferase superfamily. CmoB family. In terms of assembly, homotetramer.

The catalysed reaction is carboxy-S-adenosyl-L-methionine + 5-hydroxyuridine(34) in tRNA = 5-carboxymethoxyuridine(34) in tRNA + S-adenosyl-L-homocysteine + H(+). Catalyzes carboxymethyl transfer from carboxy-S-adenosyl-L-methionine (Cx-SAM) to 5-hydroxyuridine (ho5U) to form 5-carboxymethoxyuridine (cmo5U) at position 34 in tRNAs. The sequence is that of tRNA U34 carboxymethyltransferase from Alteromonas mediterranea (strain DSM 17117 / CIP 110805 / LMG 28347 / Deep ecotype).